We begin with the raw amino-acid sequence, 669 residues long: DNA mismatch repair protein MutL (669 aa).

Residues 357–379 (EQRQNTENNQEKTFSSEESNSKS) are disordered. Residues 361–379 (NTENNQEKTFSSEESNSKS) show a composition bias toward polar residues.

This sequence belongs to the DNA mismatch repair MutL/HexB family.

Functionally, this protein is involved in the repair of mismatches in DNA. It is required for dam-dependent methyl-directed DNA mismatch repair. May act as a 'molecular matchmaker', a protein that promotes the formation of a stable complex between two or more DNA-binding proteins in an ATP-dependent manner without itself being part of a final effector complex. In Staphylococcus aureus (strain Mu3 / ATCC 700698), this protein is DNA mismatch repair protein MutL.